Consider the following 208-residue polypeptide: Imidazoleglycerol-phosphate dehydratase (208 aa).

This sequence belongs to the imidazoleglycerol-phosphate dehydratase family.

It localises to the cytoplasm. The catalysed reaction is D-erythro-1-(imidazol-4-yl)glycerol 3-phosphate = 3-(imidazol-4-yl)-2-oxopropyl phosphate + H2O. It functions in the pathway amino-acid biosynthesis; L-histidine biosynthesis; L-histidine from 5-phospho-alpha-D-ribose 1-diphosphate: step 6/9. The chain is Imidazoleglycerol-phosphate dehydratase from Anaeromyxobacter dehalogenans (strain 2CP-1 / ATCC BAA-258).